The sequence spans 48 residues: uncharacterized protein (48 aa).

The disordered stretch occupies residues 1–48 (MLFCNNNNNNNNNNNNNNNNNNNNNNNNNNNNNNNNNNNSSNNNNFSR).

This is an uncharacterized protein from Dictyostelium discoideum (Social amoeba).